The chain runs to 465 residues: Flavin-containing monooxygenase FMO GS-OX-like 2 (465 aa).

Position 18 to 23 (18 to 23 (GAGAAG)) interacts with FAD. 217–222 (GSSASG) serves as a coordination point for NADP(+).

The protein belongs to the FMO family. It depends on FAD as a cofactor.

In terms of biological role, catalyzes the conversion of methylthioalkyl glucosinolates of any chain length into methylsulfinylalkyl glucosinolates. The sequence is that of Flavin-containing monooxygenase FMO GS-OX-like 2 from Arabidopsis thaliana (Mouse-ear cress).